The following is a 227-amino-acid chain: Probable proteasome subunit beta type-2 (227 aa).

Positions 1 to 6 are cleaved as a propeptide — removed in mature form; sequence MITKTG. The Nucleophile role is filled by Thr-7.

Belongs to the peptidase T1B family. As to quaternary structure, the 26S proteasome consists of a 20S proteasome core and two 19S regulatory subunits. The 20S proteasome core is composed of 28 subunits that are arranged in four stacked rings, resulting in a barrel-shaped structure. The two end rings are each formed by seven alpha subunits, and the two central rings are each formed by seven beta subunits. The catalytic chamber with the active sites is on the inside of the barrel.

It is found in the cytoplasm. Its subcellular location is the nucleus. It catalyses the reaction Cleavage of peptide bonds with very broad specificity.. The proteasome degrades poly-ubiquitinated proteins in the cytoplasm and in the nucleus. It is essential for the regulated turnover of proteins and for the removal of misfolded proteins. The proteasome is a multicatalytic proteinase complex that is characterized by its ability to cleave peptides with Arg, Phe, Tyr, Leu, and Glu adjacent to the leaving group at neutral or slightly basic pH. It has an ATP-dependent proteolytic activity. The chain is Probable proteasome subunit beta type-2 (PUP1) from Encephalitozoon cuniculi (strain GB-M1) (Microsporidian parasite).